The chain runs to 650 residues: MSKIKNDKRETGHLKSPPETPLLNRVRFPSDLKQIPEEDLPQLAEELRAEMIDAVSQTGGHLGAGLGVVELTVALHYIFDTPHDRLIWDVGHQAYPHKILTGRRDRIRTLRQEDGLSGFTKRSESEYDPFGAAHSSTSISAGLGMAVARELSGGQRHVIAVIGDGALSAGMAYEAMNNAGALDARLIVILNDNDMSIAPPTGAMSTYLARLASGRAYRGIRDVGKKLTSHLGKSFDRAITRAVEHARGFVTGGTLFEEMGFFHIGPIDGHDLEALVPVLRNVRDNGTGPVLIHVVTQKGKGYPPAEAAADKYHGVAKFDVITGAQAKSPAGAPSYTKVFAQALVQEAREDKRIVAITAAMPSGTGLDLFEKEFPDRSFDVGIAEQHAVTFAAGLATEGYRPFAAIYSTFLQRAYDQVVHDVAIQNLPVRFAIDRAGFVGADGATHCGAFDVAYLATLPNMVVMAAADEAELKHMVRTAADHDEGPIAFRYPRGEGTGVPLPQRGEILKIGKGRIVREGSKIALLSLGTRLADCMIAAEELEAAGLSTTVADARFAKPLDADLIRRLAREHEVLVTVEEGSIGGFGAHVLHFLAHEGLLENGLKVRPLVMPDIFMDQAKPEKMYAKAGLDAAGIVKTVFAALGQAEQAARA.

Positions 1 to 13 (MSKIKNDKRETGH) are enriched in basic and acidic residues. The segment at 1–23 (MSKIKNDKRETGHLKSPPETPLL) is disordered. Residues H92 and 133–135 (AHS) contribute to the thiamine diphosphate site. D164 provides a ligand contact to Mg(2+). Residues 165–166 (GA), N193, Y302, and E384 each bind thiamine diphosphate. Mg(2+) is bound at residue N193.

It belongs to the transketolase family. DXPS subfamily. Homodimer. It depends on Mg(2+) as a cofactor. The cofactor is thiamine diphosphate.

The catalysed reaction is D-glyceraldehyde 3-phosphate + pyruvate + H(+) = 1-deoxy-D-xylulose 5-phosphate + CO2. The protein operates within metabolic intermediate biosynthesis; 1-deoxy-D-xylulose 5-phosphate biosynthesis; 1-deoxy-D-xylulose 5-phosphate from D-glyceraldehyde 3-phosphate and pyruvate: step 1/1. In terms of biological role, catalyzes the acyloin condensation reaction between C atoms 2 and 3 of pyruvate and glyceraldehyde 3-phosphate to yield 1-deoxy-D-xylulose-5-phosphate (DXP). This chain is 1-deoxy-D-xylulose-5-phosphate synthase, found in Chelativorans sp. (strain BNC1).